Reading from the N-terminus, the 535-residue chain is MGRFHKFPLLGLVLFLGLTGSLIAANEYACSSTDIHFTRANFPKGFIFGTATAAFQVEGAVNEGCRGPSMWDVYTKKFPHKCNYHNADVAVDFYHRYKEDIKLMKNLNTDGFRFSIAWPRIFPHGRMEKGISKAGVQYYHDLIDELLANGITPLVTVFHWDTPQDLEDEYGGFLSDRIIKDFTEYANFTFQEYGDKVKHWITFNEPWVFSRAGYDIGNKAPGRCSKYIKEHGEMCHDGRSGHEAYIVSHNMLLAHADAVDAFRKCDKCKGGKIGIAHSPAWFEAHELSDEEHETPVTGLIDFILGWHLHPTTYGDYPQSMKDHIGHRLPKFTEAQKEKLKNSADFVGINYYTSVFALHDEEPDPSQPSWQSDSLVDWEPRYVDKFNAFANKPDVAKVEVYAKGLRSLLKYIKDKYGNPEIMITENGYGEDLGEQDTSLVVALSDQHRTYYIQKHLLSLHEAICDDKVNVTGYFHWSLMDNFEWQDGYKARFGLYYVDYKNNLTRHEKLSAQWYSSFLHDGSKEFEIEHEFEHDEL.

Positions 1 to 24 (MGRFHKFPLLGLVLFLGLTGSLIA) are cleaved as a signal peptide. Residues glutamine 56 and histidine 159 each contribute to the a beta-D-glucoside site. The N-linked (GlcNAc...) asparagine glycan is linked to asparagine 187. 204-205 (NE) provides a ligand contact to a beta-D-glucoside. The Proton donor role is filled by glutamate 205. Cysteines 224 and 235 form a disulfide. 2 residues coordinate a beta-D-glucoside: tyrosine 351 and glutamate 424. The Nucleophile role is filled by glutamate 424. Asparagine 468 carries an N-linked (GlcNAc...) asparagine glycan. Residues tryptophan 475, 482 to 483 (EW), and phenylalanine 491 contribute to the a beta-D-glucoside site. A glycan (N-linked (GlcNAc...) asparagine) is linked at asparagine 501. The Prevents secretion from ER signature appears at 532–535 (HDEL).

The protein belongs to the glycosyl hydrolase 1 family.

Its subcellular location is the endoplasmic reticulum lumen. It catalyses the reaction Hydrolysis of terminal, non-reducing beta-D-glucosyl residues with release of beta-D-glucose.. The protein is Beta-glucosidase 20 of Arabidopsis thaliana (Mouse-ear cress).